The sequence spans 1006 residues: MAEQESLEFGKADFVLMDTVSMPEFMANLRLRFEKGRIYTFIGEVVVSVNPYKSLNIYGRDTIEQYKGRELYERPPHLFAIADAAYKAMKRRSKDTCIVISGESGAGKTEASKYIMQYIAAITNPSQRAEIERVKNMLLKSNCVLEAFGNAKTNRNDNSSRFGKYMDINFDFKGDPIGGHINNYLLEKSRVIVQQPGERSFHSFYQLLQGGSDQMLRSLHLQKSLSSYSYIHVGAQLKSSINDAAEFKVVADAMKVIGFKPEEIQTAYKILAAILHLGNLKFVVDGDTTLIEDGKLVSIIAELLSTKTDMVEKALLYRTVATGRDVIDKQHTEQEASYGRDAFAKAIYERLFCWIVSRINDIIAVKNSDTTIHGKNTVIGVLDIYGFEIFDNNSFEQFCINYCNEKLQQLFIQLVLKQEQEEYQREGIPWKHIDYFNNQIIVDLVEQQHKGIIAILDDACMNVGKVTDEMFLEALNSKLGKHGHFSSRKLCASDKILEFDRDFRIRHYAGDVVYSVVGFIDKNKDTLFQDFKRLMYNSSNPVLKNMWPEGKLSITEVTRRPLTAATLFKNSMIALVDNLASKEPYYVRCIKPNDMKSPQIFDDERCRHQVEYLGLLENVRVRRAGFAFRQTYEKFLHRYKMISEFTWPNHDLPSDKEAVKKLVEYCGFQDDVAYGKTKIFIRTPRTLFTLEELRAQMLVRIVLFLQKVWRGTLARMRYKRTKAALTIIRYYRRYKVKSYIHEVARRFHGIKTMRDYGKHVQWPTPPKVLHRFEEVLQAVFNRWRASQLIKTIPASDLPQVRAKVAAVEMLKGQRADLGLQRAWEGNYLASKPDTPQTSGTFVPVANELKRKDKYMNVLFSCHVRKVNRFSKVEDRAIFVTDRHLYKMDPTKQYKVMKTIPLYNLTGLSVSNGKDQLVVFHTKDNKDLIVCLFSKQPTHESRIGELVGVLVNHFKSEKRHLQVNVTNPVQCSLHGKKCTVSVETRLNQPQPDFTKNRSGFILSVPGN.

N-acetylalanine is present on Ala-2. A Myosin motor domain is found at 9–695; sequence FGKADFVLMD…TLFTLEELRA (687 aa). Residue 102–109 coordinates ATP; it reads GESGAGKT. A Phosphoserine modification is found at Ser-200. A Phosphotyrosine modification is found at Tyr-536. The segment at 572-594 is actin-binding; the sequence is MIALVDNLASKEPYYVRCIKPND. 2 consecutive IQ domains span residues 699-719 and 721-741; these read VRIVLFLQKVWRGTLARMRYK and TKAALTIIRYYRRYKVKSYIH. Residues 812–1005 form the TH1 domain; it reads GQRADLGLQR…RSGFILSVPG (194 aa).

The protein belongs to the TRAFAC class myosin-kinesin ATPase superfamily. Myosin family. As to quaternary structure, interacts (via the two IQ motifs) with calmodulin. Binds an additional calmodulin chain via a third, C-terminal region. Interacts with F-actin.

It localises to the cytoplasm. Its subcellular location is the perikaryon. The protein localises to the cell projection. The protein resides in the dendrite. It is found in the early endosome. It localises to the cell cortex. Its function is as follows. Unconventional myosin that functions as actin-based motor protein with ATPase activity. Plays a role in endosomal protein trafficking, and especially in the transfer of cargo proteins from early to recycling endosomes. Required for normal planar cell polarity in ciliated tracheal cells, for normal rotational polarity of cilia, and for coordinated, unidirectional ciliary movement in the trachea. Required for normal, polarized cilia organization in brain ependymal epithelial cells. The polypeptide is Unconventional myosin-Id (MYO1D) (Bos taurus (Bovine)).